Consider the following 278-residue polypeptide: MSLVCRKFNGYNDRPWLVWLHGLLGCGDEWLPLVNLCAQHPSLVIDLPGHGDSTDVRVKDLLEMSCLLSETLAEQRISQYWLIGYSLGGRIAMHHACYGDIRGLCGLLIEGGNPGLFSQQERNNRLEHDRNWAGRFRSQPIEQVLSDWYQQPVFSDLLPEQRQQLIKVRRHNNGDGVANMLENTSLGHQPWLVPVLQQLTLPFVYLCGENDKKFQHLAKRCALPLQTIPRVGHNAHRANAVAFAAVVNHFLSLFNKEYEYDLPERRRTLFPNCMAGLL.

The protein belongs to the AB hydrolase superfamily. MenH family. As to quaternary structure, monomer.

The enzyme catalyses 5-enolpyruvoyl-6-hydroxy-2-succinyl-cyclohex-3-ene-1-carboxylate = (1R,6R)-6-hydroxy-2-succinyl-cyclohexa-2,4-diene-1-carboxylate + pyruvate. The protein operates within quinol/quinone metabolism; 1,4-dihydroxy-2-naphthoate biosynthesis; 1,4-dihydroxy-2-naphthoate from chorismate: step 3/7. Its pathway is quinol/quinone metabolism; menaquinone biosynthesis. Its function is as follows. Catalyzes a proton abstraction reaction that results in 2,5-elimination of pyruvate from 2-succinyl-5-enolpyruvyl-6-hydroxy-3-cyclohexene-1-carboxylate (SEPHCHC) and the formation of 2-succinyl-6-hydroxy-2,4-cyclohexadiene-1-carboxylate (SHCHC). The polypeptide is 2-succinyl-6-hydroxy-2,4-cyclohexadiene-1-carboxylate synthase (Photorhabdus laumondii subsp. laumondii (strain DSM 15139 / CIP 105565 / TT01) (Photorhabdus luminescens subsp. laumondii)).